Here is a 338-residue protein sequence, read N- to C-terminus: Aspartate carbamoyltransferase catalytic subunit (338 aa).

The carbamoyl phosphate site is built by Arg57 and Thr58. An L-aspartate-binding site is contributed by Lys86. The carbamoyl phosphate site is built by Arg107, His135, and Gln138. Arg172 and Arg234 together coordinate L-aspartate. Leu274 and Pro275 together coordinate carbamoyl phosphate.

Belongs to the aspartate/ornithine carbamoyltransferase superfamily. ATCase family. In terms of assembly, heterododecamer (2C3:3R2) of six catalytic PyrB chains organized as two trimers (C3), and six regulatory PyrI chains organized as three dimers (R2).

The catalysed reaction is carbamoyl phosphate + L-aspartate = N-carbamoyl-L-aspartate + phosphate + H(+). The protein operates within pyrimidine metabolism; UMP biosynthesis via de novo pathway; (S)-dihydroorotate from bicarbonate: step 2/3. In terms of biological role, catalyzes the condensation of carbamoyl phosphate and aspartate to form carbamoyl aspartate and inorganic phosphate, the committed step in the de novo pyrimidine nucleotide biosynthesis pathway. The sequence is that of Aspartate carbamoyltransferase catalytic subunit from Cellvibrio japonicus (strain Ueda107) (Pseudomonas fluorescens subsp. cellulosa).